A 138-amino-acid polypeptide reads, in one-letter code: Small ribosomal subunit protein uS11c (138 aa).

The disordered stretch occupies residues 1–21 (MTKAIQKIGSRRNGRIASRKN). Residues 9–21 (GSRRNGRIASRKN) show a composition bias toward basic residues.

The protein belongs to the universal ribosomal protein uS11 family. Part of the 30S ribosomal subunit.

The protein localises to the plastid. The protein resides in the chloroplast. This is Small ribosomal subunit protein uS11c from Ceratophyllum demersum (Rigid hornwort).